We begin with the raw amino-acid sequence, 1377 residues long: DNA-directed RNA polymerase subunit beta' (1377 aa).

Zn(2+)-binding residues include C60, C62, C75, and C78. Mg(2+) is bound by residues D449, D451, and D453. Residues C777, C851, C858, and C861 each coordinate Zn(2+).

Belongs to the RNA polymerase beta' chain family. As to quaternary structure, the RNAP catalytic core consists of 2 alpha, 1 beta, 1 beta' and 1 omega subunit. When a sigma factor is associated with the core the holoenzyme is formed, which can initiate transcription. Mg(2+) is required as a cofactor. The cofactor is Zn(2+).

The enzyme catalyses RNA(n) + a ribonucleoside 5'-triphosphate = RNA(n+1) + diphosphate. Functionally, DNA-dependent RNA polymerase catalyzes the transcription of DNA into RNA using the four ribonucleoside triphosphates as substrates. In Borrelia hermsii (strain HS1 / DAH), this protein is DNA-directed RNA polymerase subunit beta'.